The chain runs to 681 residues: Cell cycle checkpoint protein RAD17 (681 aa).

Residues 17-25 carry the RAD1-binding motif motif; sequence DWVDPSFDD. The segment at 42 to 61 is disordered; it reads VNNSSHRRKNGPSTLESSRF. Residue Thr55 is modified to Phosphothreonine. Residues Ser71 and Ser86 each carry the phosphoserine modification. 137-144 serves as a coordination point for ATP; the sequence is GPPGCGKT. Disordered regions lie at residues 344–377 and 606–681; these read SSKGENNLRPRKKGMSLKSDAVLSKSKRRKKPDR and HGMI…SDGT. Ser359 is subject to Phosphoserine. Residues 432-681 form an interaction with MCM7 region; it reads LVEPEEVVEM…IIEDYESDGT (250 aa). The span at 631-662 shows a compositional bias: polar residues; sequence EPTQATVPETWSLPLSQNSASELPASQPQPFS. The residue at position 633 (Thr633) is a Phosphothreonine; by ATM. Residues Ser646 and Ser656 each carry the phosphoserine; by ATR and ATM modification. The span at 666–681 shows a compositional bias: acidic residues; sequence DMEENIIIEDYESDGT.

It belongs to the rad17/RAD24 family. Part of a DNA-binding complex containing RFC2, RFC3, RFC4 and RFC5. Interacts with RAD1 and RAD9 within the 9-1-1 (RAD1-RAD9-HUS1) complex. Interacts with RAD9B, POLE, SNU13 and MCM7. DNA damage promotes interaction with ATR or ATM and disrupts interaction with the 9-1-1 (RAD1-RAD9-HUS1) complex. Interacts (when phosphorylated) with NBN; promoting recruitment of the MRN complex to DNA damage sites. Post-translationally, phosphorylation on Ser-646 and Ser-656 is cell cycle-regulated, enhanced by genotoxic stress, and required for activation of checkpoint signaling. Phosphorylation is mediated by ATR upon UV or replication arrest, whereas it may be mediated both by ATR and ATM upon ionizing radiation. Phosphorylation on both sites is required for interaction with RAD1 but dispensable for interaction with RFC3 or RFC4. Phosphorylation at Thr-633 by ATM in response to DNA damage promotes interaction with NBN and recruitment of the MRN complex to DNA damage sites. In terms of tissue distribution, overexpressed in various cancer cell lines and in colon carcinoma (at protein level). Isoform 2 and isoform 3 are the most abundant isoforms in non irradiated cells (at protein level). Ubiquitous at low levels. Highly expressed in testis, where it is expressed within the germinal epithelium of the seminiferous tubuli. Weakly expressed in seminomas (testicular tumors).

It localises to the nucleus. Its subcellular location is the chromosome. Its function is as follows. Essential for sustained cell growth, maintenance of chromosomal stability, and ATR-dependent checkpoint activation upon DNA damage. Has a weak ATPase activity required for binding to chromatin. Participates in the recruitment of the 9-1-1 (RAD1-RAD9-HUS1) complex and RHNO1 onto chromatin, and in CHEK1 activation. Involved in homologous recombination by mediating recruitment of the MRN complex to DNA damage sites. May also serve as a sensor of DNA replication progression. The sequence is that of Cell cycle checkpoint protein RAD17 from Homo sapiens (Human).